A 246-amino-acid polypeptide reads, in one-letter code: 3'(2'),5'-bisphosphate nucleotidase CysQ (246 aa).

Glu64, Asp83, Leu85, Asp86, and Asp205 together coordinate Mg(2+). Residue Glu64 coordinates substrate. Substrate is bound by residues 85–88 and Asp205; that span reads LDGT.

It belongs to the inositol monophosphatase superfamily. CysQ family. Mg(2+) serves as cofactor.

Its subcellular location is the cell inner membrane. It carries out the reaction adenosine 3',5'-bisphosphate + H2O = AMP + phosphate. In terms of biological role, converts adenosine-3',5'-bisphosphate (PAP) to AMP. This is 3'(2'),5'-bisphosphate nucleotidase CysQ from Shigella flexneri.